Reading from the N-terminus, the 140-residue chain is ATP synthase epsilon chain (140 aa).

This sequence belongs to the ATPase epsilon chain family. As to quaternary structure, F-type ATPases have 2 components, CF(1) - the catalytic core - and CF(0) - the membrane proton channel. CF(1) has five subunits: alpha(3), beta(3), gamma(1), delta(1), epsilon(1). CF(0) has three main subunits: a, b and c.

Its subcellular location is the cell inner membrane. In terms of biological role, produces ATP from ADP in the presence of a proton gradient across the membrane. This chain is ATP synthase epsilon chain, found in Nitrosomonas europaea (strain ATCC 19718 / CIP 103999 / KCTC 2705 / NBRC 14298).